The following is a 213-amino-acid chain: ATP synthase peripheral stalk subunit OSCP, mitochondrial (213 aa).

The N-terminal 23 residues, M1 to P23, are a transit peptide targeting the mitochondrion. The short motif at A5–P23 is the SIFI-degron element. Residues K54, K60, K70, and K73 each carry the N6-acetyllysine modification. The residue at position 90 (K90) is an N6-succinyllysine. Residues K100 and K158 each carry the N6-acetyllysine; alternate modification. An N6-succinyllysine; alternate mark is found at K100 and K158. N6-acetyllysine is present on residues K172, K176, and K192. An N6-succinyllysine modification is found at K199.

The protein belongs to the ATPase delta chain family. In terms of assembly, component of the ATP synthase complex composed at least of ATP5F1A/subunit alpha, ATP5F1B/subunit beta, ATP5MC1/subunit c (homooctomer), MT-ATP6/subunit a, MT-ATP8/subunit 8, ATP5ME/subunit e, ATP5MF/subunit f, ATP5MG/subunit g, ATP5MK/subunit k, ATP5MJ/subunit j, ATP5F1C/subunit gamma, ATP5F1D/subunit delta, ATP5F1E/subunit epsilon, ATP5PF/subunit F6, ATP5PB/subunit b, ATP5PD/subunit d, ATP5PO/subunit OSCP. ATP synthase complex consists of a soluble F(1) head domain (subunits alpha(3) and beta(3)) - the catalytic core - and a membrane F(0) domain - the membrane proton channel (subunits c, a, 8, e, f, g, k and j). These two domains are linked by a central stalk (subunits gamma, delta, and epsilon) rotating inside the F1 region and a stationary peripheral stalk (subunits F6, b, d, and OSCP). Post-translationally, in response to mitochondrial stress, the precursor protein is ubiquitinated by the SIFI complex in the cytoplasm before mitochondrial import, leading to its degradation. Within the SIFI complex, UBR4 initiates ubiquitin chain that are further elongated or branched by KCMF1.

It localises to the mitochondrion. The protein resides in the mitochondrion inner membrane. Its function is as follows. Subunit OSCP, of the mitochondrial membrane ATP synthase complex (F(1)F(0) ATP synthase or Complex V) that produces ATP from ADP in the presence of a proton gradient across the membrane which is generated by electron transport complexes of the respiratory chain. ATP synthase complex consist of a soluble F(1) head domain - the catalytic core - and a membrane F(1) domain - the membrane proton channel. These two domains are linked by a central stalk rotating inside the F(1) region and a stationary peripheral stalk. During catalysis, ATP synthesis in the catalytic domain of F(1) is coupled via a rotary mechanism of the central stalk subunits to proton translocation. In vivo, can only synthesize ATP although its ATP hydrolase activity can be activated artificially in vitro. Part of the complex F(0) domain. Part of the complex F(0) domain and the peripheric stalk, which acts as a stator to hold the catalytic alpha(3)beta(3) subcomplex and subunit a/ATP6 static relative to the rotary elements. The chain is ATP synthase peripheral stalk subunit OSCP, mitochondrial from Rhinolophus ferrumequinum (Greater horseshoe bat).